A 1622-amino-acid polypeptide reads, in one-letter code: FK506-binding protein 5 (1622 aa).

One can recognise a PPIase FKBP-type domain in the interval 178-269 (GDRVSIKYAG…IFDLEVTGSK (92 aa)). Positions 268–306 (SKKKEGSEPSLPSLNGQPSNAPQQSLPTQLFDNSPVPQD) are disordered. Residues 277-303 (SLPSLNGQPSNAPQQSLPTQLFDNSPV) are compositionally biased toward polar residues. Arg314 carries the omega-N-methylarginine modification. 2 disordered regions span residues 320–432 (RATG…GFNN) and 518–538 (SPPPPVQQAPPPTPAPAPPPP). Residues 335–432 (ESNSRNSHSN…NMNNNNGFNN (98 aa)) are compositionally biased toward low complexity. Coiled coils occupy residues 607-827 (LVQT…ETER) and 854-961 (KKEE…LESQ). 2 disordered regions span residues 1043 to 1097 (KQQQ…EVVV) and 1122 to 1622 (EEVK…VLPL). Acidic residues-rich tracts occupy residues 1050 to 1093 (KEEE…EEEK) and 1152 to 1168 (DDEDDDDDEDDYDDINE). Basic and acidic residues predominate over residues 1169-1182 (EDLKNIDAEIEKMQ). Acidic residues-rich tracts occupy residues 1185 to 1199 (MGDELEDDDDEEEEK) and 1222 to 1260 (ESEEEEEEETKVEVPVLEEEKEEEETKVEVPVLEDEQED). Over residues 1261–1271 (KVESDVEEKIV) the composition is skewed to basic and acidic residues. The span at 1320–1335 (DDDEDNEKDVASDSEE) shows a compositional bias: acidic residues. The segment covering 1353–1369 (EEKVVEQVKEEINETKF) has biased composition (basic and acidic residues). Positions 1380–1412 (TTTEEKEEEKEEEKVEEEEEKVVEPPTIDDDET) are enriched in acidic residues. 2 stretches are compositionally biased toward low complexity: residues 1435–1449 (STTAATTSTTTTSST) and 1465–1504 (KTSFFDFDDSPFSAETETETKSTAASSDPFADTTSSTPTS). 2 stretches are compositionally biased toward polar residues: residues 1519 to 1532 (FGNSSDIFDKPSTT) and 1581 to 1609 (AKSNNNTPSRQKQDFSSLFGSDPTISPLT).

The protein belongs to the FKBP-type PPIase family.

The enzyme catalyses [protein]-peptidylproline (omega=180) = [protein]-peptidylproline (omega=0). With respect to regulation, inhibited by both FK506 and rapamycin. In terms of biological role, PPIases accelerate the folding of proteins by catalyzing the cis-trans isomerization of proline imidic peptide bonds in oligopeptides. This Dictyostelium discoideum (Social amoeba) protein is FK506-binding protein 5 (fkbp5).